Here is a 687-residue protein sequence, read N- to C-terminus: Chloride channel protein ClC-Kb (687 aa).

Residues 1–50 are Cytoplasmic-facing; it reads MEELVGLREGASKKPVPLQELWGPCPRIRRNIQGGLEWLKERLFRVGEDW. 2 consecutive transmembrane segments (helical) span residues 51-82 and 91-111; these read YFLVALGVLMALISYAMNFTIGRVVRAHKWLY and LRYLSWTVYPVALLSFSSGFS. The helical intramembrane region spans 116–127; sequence PSSGGSGIPEVK. Serine 121 provides a ligand contact to chloride. A run of 2 helical transmembrane segments spans residues 141–160 and 161–180; these read IKNFGAKVVGLSCTLATGST and IFLGKLGPFVHLSVMIAAYL. The segment at residues 203-224 is an intramembrane region (helical); that stretch reads AGAAVGVATVFAAPISGVLFSI. The helical transmembrane segment at 236–255 threads the bilayer; sequence YWRGFFAATCGAFMFHLLAV. Ca(2+) is bound by residues glutamate 259, glutamate 261, aspartate 278, and glutamate 281. The next 2 helical transmembrane spans lie at 282–310 and 325–342; these read IFFFVALGAICGILSCGYNYSQRTFLFFL and PLYSALAAVVLASITYPP. An intramembrane region (helical) is located at residues 349–360; sequence ASRLSMSEHLET. Helical transmembrane passes span 400–420 and 421–440; these read GTLVFFLVMKFWMLILATTIP and IPAGYFLPIFIYGAVIGRLF. Position 426 (phenylalanine 426) interacts with chloride. The helical intramembrane region spans 464-496; sequence GAYALAGAAAFSGAVTHTLSTALLAFEVTGQLV. A helical membrane pass occupies residues 500–520; the sequence is PVLMAVLAANAISQSFQPSFY. Residues 521–687 lie on the Cytoplasmic side of the membrane; sequence DGTIIVKKLP…STLTNPPAPK (167 aa). CBS domains are found at residues 551 to 609 and 626 to 687; these read MNCA…EPAS and CPTQ…PAPK.

Belongs to the chloride channel (TC 2.A.49) family. CLCNKB subfamily. In terms of assembly, homodimer. Interacts with BSND. N-glycosylated. Specifically expressed in the kidney, predominantly in the outer medulla and cortex. All nephron segments expressing BSND also express CLCNK proteins.

It localises to the basolateral cell membrane. It carries out the reaction chloride(in) = chloride(out). It catalyses the reaction iodide(out) = iodide(in). The enzyme catalyses nitrate(in) = nitrate(out). The catalysed reaction is bromide(in) = bromide(out). Functionally, anion-selective channel permeable to small monovalent anions with ion selectivity for chloride &gt; bromide &gt; nitrate &gt; iodide. Forms a homodimeric channel where each subunit has its own ion conduction pathway. May conduct double-barreled currents controlled by two types of gates, two fast gates that control each subunit independently and a slow common gate that opens and shuts off both subunits simultaneously. Assembles with the regulatory subunit BSND/Barttin for sorting at the basolateral plasma membrane domain and functional switch to the ion conducting state. CLCNKB:BSND channels display mostly a linear current-voltage relationship controlled by common gate. Mediates chloride conductance along nephron segments, namely the thick ascending limb of Henle's loop, convoluted tubule and the collecting duct, contributing to the maintenance of systemic acid-base and electrolyte homeostasis. Conducts chloride currents in the stria vascularis of the inner ear to establish the endocochlear potential necessary for normal hearing. In Mus musculus (Mouse), this protein is Chloride channel protein ClC-Kb.